The sequence spans 1038 residues: uncharacterized protein (1038 aa).

Over residues 1 to 14 (MEENTAQKQSNATG) the composition is skewed to polar residues. The interval 1–100 (MEENTAQKQS…QSENENYDFS (100 aa)) is disordered. Over residues 58-71 (NPERELNSDGTDRI) the composition is skewed to basic and acidic residues. A compositionally biased stretch (acidic residues) spans 72–83 (IEEEEEEDDIEN). Phosphoserine is present on residues S112, S113, and S114. 5 disordered regions span residues 144-201 (GKDP…VKRR), 360-381 (ELDNTSEKATLETSSKPVTEQA), 422-441 (SHSNHSNEKFEQIPSPDEKL), 454-526 (QTTK…SGEL), and 556-575 (TNSEVETVTNDPSFSQQPGT). Over residues 156-179 (SSMASSSTRSSQSSQVSAIQPQSQ) the composition is skewed to low complexity. Over residues 180-198 (DDNRVSDIRQMENRRELNV) the composition is skewed to basic and acidic residues. Basic and acidic residues-rich tracts occupy residues 426 to 441 (HSNEKFEQIPSPDEKL) and 489 to 505 (DAEKEKDENLSKPEHHP). S436 is modified (phosphoserine). Residues 506-522 (SITSVNSPFLYSPSKQP) show a composition bias toward polar residues. Phosphoserine is present on residues S618 and S856. Disordered regions lie at residues 803–864 (RGSL…ASAD), 940–974 (GEAPKEAPPPPRSEPVSTTTKLAKRITQPSLSPAR), and 1005–1024 (KAKSEQSNAKSSSSSIKESK). Residues 826 to 859 (TLSLKTSTTGLSSHSKSAENNSTQQSTTSPSINS) are compositionally biased toward low complexity. Residues 955–974 (VSTTTKLAKRITQPSLSPAR) are compositionally biased toward polar residues. Low complexity predominate over residues 1009-1020 (EQSNAKSSSSSI).

It is found in the cytoplasm. This is an uncharacterized protein from Schizosaccharomyces pombe (strain 972 / ATCC 24843) (Fission yeast).